The following is a 433-amino-acid chain: G-protein coupled receptor 22 (433 aa).

Residues 1–45 (MCFSPILEINMQSESNITVRDDIDDINTNMYQPLSYPLSFQVSLT) lie on the Extracellular side of the membrane. The N-linked (GlcNAc...) asparagine glycan is linked to Asn-16. The chain crosses the membrane as a helical span at residues 46–66 (GFLMLEIVLGLGSNLTVLVLY). At 67–85 (CMKSNLINSVSNIITMNLH) the chain is on the cytoplasmic side. Residues 86-106 (VLDVIICVGCIPLTIVILLLS) traverse the membrane as a helical segment. Over 107–115 (LESNTALIC) the chain is Extracellular. The helical transmembrane segment at 116–136 (CFHEACVSFASVSTAINVFAI) threads the bilayer. Over 137–156 (TLDRYDISVKPANRILTMGR) the chain is Cytoplasmic. Residues 157–177 (AVMLMISIWIFSFFSFLIPFI) form a helical membrane-spanning segment. Residues 178 to 208 (EVNFFSLQSGNTWENKTLLCVSTNEYYTELG) are Extracellular-facing. Residue Asn-192 is glycosylated (N-linked (GlcNAc...) asparagine). The chain crosses the membrane as a helical span at residues 209–229 (MYYHLLVQIPIFFFTVVVMLI). The Cytoplasmic segment spans residues 230–315 (TYTKILQALN…ERQKRVFRMS (86 aa)). A helical transmembrane segment spans residues 316–336 (LLIISTFLLCWTPISVLNTTI). Residues 337-349 (LCLGPSDLLVKLR) are Extracellular-facing. A helical transmembrane segment spans residues 350–370 (LCFLVMAYGTTIFHPLLYAFT). The Cytoplasmic portion of the chain corresponds to 371–433 (RQKFQKVLKS…KCLVPQVVTD (63 aa)).

Belongs to the G-protein coupled receptor 1 family. High expression in adult and fetal heart tissue. Expressed in the brain, with enrichment in the accumbens, amygdala, cerebellum, cortex, and hippocampus regions.

It is found in the cell membrane. Functionally, orphan G-protein coupled receptor. Seems to act through a G(i)/G(o) mediated pathway. May be involved in ciliogenesis. This chain is G-protein coupled receptor 22, found in Homo sapiens (Human).